The following is a 724-amino-acid chain: WD repeat-containing protein 91 (724 aa).

A coiled-coil region spans residues 178–207 (FDSEVQRITSLQEDNEQLRQTVFALQGESR). Positions 249–365 (SRNFFSTFLP…PDQTDSANQT (117 aa)) are disordered. Polar residues-rich tracts occupy residues 270 to 279 (GPQSSPTQSA) and 303 to 315 (SVSS…STSH). Position 274 is a phosphoserine (S274). Residues 322–333 (QDHEKERKELFS) show a composition bias toward basic and acidic residues. Over residues 349-365 (DTQTEAPPDQTDSANQT) the composition is skewed to polar residues. WD repeat units lie at residues 389–428 (EHHS…QTKA), 431–471 (MSKS…CLYE), 499–532 (AHSG…QQLQ), 537–576 (PGPV…SALS), 579–618 (AHDG…VKQS), 641–679 (VQVP…AGLE), and 686–724 (GHKA…AQKP).

This sequence belongs to the WD repeat WDR91 family.

It localises to the early endosome membrane. It is found in the late endosome membrane. In terms of biological role, functions as a negative regulator of the PI3 kinase/PI3K activity associated with endosomal membranes. By modifying the phosphatidylinositol 3-phosphate/PtdInsP3 content of endosomal membranes may regulate endosome fusion, recycling, sorting and early to late endosome transport. This chain is WD repeat-containing protein 91 (wdr91), found in Danio rerio (Zebrafish).